The sequence spans 329 residues: 31 kDa immunogenic protein (329 aa).

Positions 1-28 are cleaved as a signal peptide; sequence MKFGSKIRRLAVAAVAGAIALGASFAVA.

The sequence is that of 31 kDa immunogenic protein (bcsP31) from Brucella abortus biovar 1 (strain 9-941).